Consider the following 264-residue polypeptide: Phosphonates import ATP-binding protein PhnC (264 aa).

The 244-residue stretch at 3 to 246 (IRLQEAGLRH…MLDALYANEQ (244 aa)) folds into the ABC transporter domain. 35–42 (GPSGAGKS) contributes to the ATP binding site.

Belongs to the ABC transporter superfamily. Phosphonates importer (TC 3.A.1.9.1) family. As to quaternary structure, the complex is composed of two ATP-binding proteins (PhnC), two transmembrane proteins (PhnE) and a solute-binding protein (PhnD).

It localises to the cell inner membrane. The enzyme catalyses phosphonate(out) + ATP + H2O = phosphonate(in) + ADP + phosphate + H(+). Part of the ABC transporter complex PhnCDE involved in phosphonates import. Responsible for energy coupling to the transport system. This Pseudomonas entomophila (strain L48) protein is Phosphonates import ATP-binding protein PhnC.